The sequence spans 149 residues: Small ribosomal subunit protein uS15 (149 aa).

Residues 1 to 11 are compositionally biased toward basic and acidic residues; it reads MARMHSRDRGK. Positions 1–25 are disordered; sequence MARMHSRDRGKSGSTRPPRVAPPSW.

It belongs to the universal ribosomal protein uS15 family. As to quaternary structure, part of the 30S ribosomal subunit.

This chain is Small ribosomal subunit protein uS15, found in Methanopyrus kandleri (strain AV19 / DSM 6324 / JCM 9639 / NBRC 100938).